The following is a 425-amino-acid chain: Serine/threonine transporter SstT (425 aa).

A run of 9 helical transmembrane segments spans residues 11–31 (FLNG…LILA), 43–63 (FLGS…VFVL), 91–111 (LFAA…LVLV), 141–161 (ALVS…GFAL), 182–202 (IVHL…AGTI), 216–236 (LLAV…PIIV), 290–310 (IPLG…VLTL), 316–336 (LGIE…AVSA), and 363–383 (VAMQ…SAET).

It belongs to the dicarboxylate/amino acid:cation symporter (DAACS) (TC 2.A.23) family.

The protein localises to the cell inner membrane. It catalyses the reaction L-serine(in) + Na(+)(in) = L-serine(out) + Na(+)(out). The catalysed reaction is L-threonine(in) + Na(+)(in) = L-threonine(out) + Na(+)(out). Its function is as follows. Involved in the import of serine and threonine into the cell, with the concomitant import of sodium (symport system). This chain is Serine/threonine transporter SstT, found in Psychromonas ingrahamii (strain DSM 17664 / CCUG 51855 / 37).